Here is a 364-residue protein sequence, read N- to C-terminus: Histidinol-phosphate aminotransferase (364 aa).

The residue at position 226 (K226) is an N6-(pyridoxal phosphate)lysine.

The protein belongs to the class-II pyridoxal-phosphate-dependent aminotransferase family. Histidinol-phosphate aminotransferase subfamily. In terms of assembly, homodimer. Requires pyridoxal 5'-phosphate as cofactor.

It catalyses the reaction L-histidinol phosphate + 2-oxoglutarate = 3-(imidazol-4-yl)-2-oxopropyl phosphate + L-glutamate. It participates in amino-acid biosynthesis; L-histidine biosynthesis; L-histidine from 5-phospho-alpha-D-ribose 1-diphosphate: step 7/9. The chain is Histidinol-phosphate aminotransferase from Sulfurimonas denitrificans (strain ATCC 33889 / DSM 1251) (Thiomicrospira denitrificans (strain ATCC 33889 / DSM 1251)).